The sequence spans 475 residues: MNYEIVVGLEVHCQLNTESKAFCGCSAKFGKPANTNVCPVCLALPGALPVLNARVVEDAVKLGLATNCTIARHSILARKNYFYPDLPKGYQISQYEEPICSEGVIHIDLEEGGKDVRLVRIHIEEDAGKSIHDIGDDTYIDVNRCGVPLLEIVSYPDMRTPKEASAYLQKLRQIVRYLGISDGNMEEGSLRCDANVSVRPVGATEYGTRTEIKNMNSFRNVERAIEYEAKRHIEVIEGGGTIVQETRLWDADKLETRSMRGKEHAHDYRYFPDPDLVPVLVDDGMIRRMQEELPEFPEDRAARFVSEFGIPAYDAGVITVDRELADYFESTVKVSGDAKASSNWVMGEVMRTLKEKYLDIHKFAISPERLGGLIKLINAGAISNTIAKQVFEIMQQDEATAEAIVEREGLAQVSDRGAIEAAIREILEANQKQLEQYRSGKTQLFGFFVGQCMQKMKGKANPKMVNDILRSMLDA.

It belongs to the GatB/GatE family. GatB subfamily. As to quaternary structure, heterotrimer of A, B and C subunits.

It carries out the reaction L-glutamyl-tRNA(Gln) + L-glutamine + ATP + H2O = L-glutaminyl-tRNA(Gln) + L-glutamate + ADP + phosphate + H(+). It catalyses the reaction L-aspartyl-tRNA(Asn) + L-glutamine + ATP + H2O = L-asparaginyl-tRNA(Asn) + L-glutamate + ADP + phosphate + 2 H(+). Its function is as follows. Allows the formation of correctly charged Asn-tRNA(Asn) or Gln-tRNA(Gln) through the transamidation of misacylated Asp-tRNA(Asn) or Glu-tRNA(Gln) in organisms which lack either or both of asparaginyl-tRNA or glutaminyl-tRNA synthetases. The reaction takes place in the presence of glutamine and ATP through an activated phospho-Asp-tRNA(Asn) or phospho-Glu-tRNA(Gln). The chain is Aspartyl/glutamyl-tRNA(Asn/Gln) amidotransferase subunit B from Chlorobaculum tepidum (strain ATCC 49652 / DSM 12025 / NBRC 103806 / TLS) (Chlorobium tepidum).